Reading from the N-terminus, the 117-residue chain is Glycoprotein hormones alpha chain (117 aa).

Residues 1–23 form the signal peptide; it reads MGSVKSAGLSLLLLSFLLYVADS. 5 disulfide bridges follow: cysteine 34/cysteine 57, cysteine 37/cysteine 86, cysteine 54/cysteine 107, cysteine 58/cysteine 109, and cysteine 85/cysteine 112. N-linked (GlcNAc...) asparagine glycans are attached at residues asparagine 78 and asparagine 103.

The protein belongs to the glycoprotein hormones subunit alpha family. As to quaternary structure, heterodimer. Glycoprotein hormones are heterodimers composed of a common alpha chain described here and a unique beta chain which confers their biological specificity to the different hormones.

It is found in the secreted. Its function is as follows. Shared alpha chain of heterodimeric glycoprotein hormones. These hormones bind specific receptors on target cells that in turn activate downstream signaling pathways. Involved in gametogenesis and steroidogenesis. This Acanthopagrus latus (Yellowfin seabream) protein is Glycoprotein hormones alpha chain (cga).